Here is a 1499-residue protein sequence, read N- to C-terminus: Ring canal kelch homolog (1499 aa).

Residues leucine 56–arginine 66 show a composition bias toward polar residues. Residues leucine 56–glycine 75 are disordered. The region spanning cysteine 100–glutamate 166 is the BTB domain. Kelch repeat units follow at residues valine 351–aspartate 396, lysine 397–asparagine 443, cysteine 444–glycine 490, leucine 492–asparagine 539, leucine 541–glycine 586, and leucine 588–lysine 634. Residue selenocysteine 637 is a non-standard amino acid, selenocysteine. Disordered regions lie at residues alanine 679–valine 714, leucine 750–glycine 786, alanine 825–leucine 856, asparagine 984–valine 1017, serine 1033–glycine 1085, alanine 1107–valine 1160, glutamine 1301–threonine 1321, and alanine 1334–glutamate 1499. Positions asparagine 698–asparagine 713 are enriched in low complexity. A compositionally biased stretch (gly residues) spans glycine 776 to glycine 786. The span at serine 986–alanine 1003 shows a compositional bias: low complexity. Over residues threonine 1004–valine 1017 the composition is skewed to polar residues. Residues serine 1040–alanine 1054 are compositionally biased toward low complexity. Over residues isoleucine 1065–glycine 1085 the composition is skewed to gly residues. Low complexity predominate over residues alanine 1107–glycine 1119. A compositionally biased stretch (polar residues) spans glycine 1135 to glutamine 1147. The segment covering asparagine 1348–threonine 1359 has biased composition (basic and acidic residues). A compositionally biased stretch (low complexity) spans serine 1401 to aspartate 1410. Residues valine 1460 to leucine 1471 are compositionally biased toward polar residues.

It localises to the cytoplasm. The protein resides in the cytoskeleton. May play a role in organizing the actin cytoskeleton. The sequence is that of Ring canal kelch homolog from Anopheles stephensi (Indo-Pakistan malaria mosquito).